The following is a 406-amino-acid chain: Transcriptional activator NprA (406 aa).

TPR repeat units lie at residues 125–158, 206–239, 246–279, and 285–318; these read YYYY…FRSQ, AECH…AQII, GTIE…KRNS, and FITL…LKRE.

Functionally, activates the transcription of nprS by about five fold. May bind to the upstream region of nprS promoter. In Geobacillus stearothermophilus (Bacillus stearothermophilus), this protein is Transcriptional activator NprA (nprA).